Reading from the N-terminus, the 204-residue chain is Phosphoribosyl-dephospho-CoA transferase (204 aa).

Residues D129 and D131 contribute to the active site.

This sequence belongs to the MdcG family.

It carries out the reaction apo-[malonate decarboxylase ACP] + 2'-(5''-triphospho-alpha-D-ribosyl)-3'-dephospho-CoA = holo-[malonate decarboxylase ACP] + diphosphate. Its function is as follows. Transfers 2'-(5-triphosphoribosyl)-3'-dephosphocoenzyme-A to the apo-[acyl-carrier-protein] of the malonate decarboxylase to yield holo-[acyl-carrier-protein]. The chain is Phosphoribosyl-dephospho-CoA transferase from Pseudomonas putida (strain W619).